We begin with the raw amino-acid sequence, 424 residues long: MAKNIQAIRGMNDYLPGETAIWQRIEGTLKNVLGSYGYSEIRLPIVEQTPLFKRAIGEVTDVVEKEMYTFEDRNGDSLTLRPEGTAGCVRAGIEHGLLYNQEQRLWYIGPMFRHERPQKGRYRQFHQLGAEVFGLQGPDIDAELIMLTARWWRALGIAEHVSLELNSIGSLEARANYRDALVAFLEQHQETLDEDCKRRMYTNPLRVLDSKNPDVQALLNDAPALGDYLDDDSREHFAGLCKLLDAAGIAYTVNQRLVRGLDYYNRTVFEWVTNSLGSQGTVCAGGRYDGLVEQLGGRATPAVGFAMGLERLVLLVQAVNPEFIASPVVDIYLVAAGAQTQSAAMTLAERLRDEMPGVKLMTNHGGGNFKKQFARADKWGARIALVLGESEVADGTVVVKDLRSGEQTAVAQDSVAAHLRTLLG.

The protein belongs to the class-II aminoacyl-tRNA synthetase family. Homodimer.

It localises to the cytoplasm. It carries out the reaction tRNA(His) + L-histidine + ATP = L-histidyl-tRNA(His) + AMP + diphosphate + H(+). The sequence is that of Histidine--tRNA ligase from Salmonella paratyphi B (strain ATCC BAA-1250 / SPB7).